The sequence spans 215 residues: Triosephosphate isomerase (215 aa).

The active-site Electrophile is histidine 82. The Proton acceptor role is filled by glutamate 153.

This sequence belongs to the triosephosphate isomerase family. Homodimer.

The catalysed reaction is D-glyceraldehyde 3-phosphate = dihydroxyacetone phosphate. It functions in the pathway carbohydrate biosynthesis; gluconeogenesis. It participates in carbohydrate degradation; glycolysis; D-glyceraldehyde 3-phosphate from glycerone phosphate: step 1/1. The chain is Triosephosphate isomerase (Tpi) from Heliothis virescens (Tobacco budworm moth).